The chain runs to 185 residues: Homeobox expressed in ES cells 1 (185 aa).

The homeobox DNA-binding region spans 108 to 167 (GRRPRTAFTQNQIEVLENVFRVNCYPGIDIREDLAQKLNLEEDRIQIWFQNRRAKLKRSH).

It belongs to the ANF homeobox family. As to quaternary structure, can form heterodimers with PROP1 in binding to DNA. Interacts with TLE1.

It localises to the nucleus. Its function is as follows. Required for the normal development of the forebrain, eyes and other anterior structures such as the olfactory placodes and pituitary gland. Possible transcriptional repressor. Binds to the palindromic PIII sequence, 5'-AGCTTGAGTCTAATTGAATTAACTGTAC-3'. HESX1 and PROP1 bind as heterodimers on this palindromic site, and, in vitro, HESX1 can antagonize PROP1 activation. The polypeptide is Homeobox expressed in ES cells 1 (HESX1) (Pan troglodytes (Chimpanzee)).